An 81-amino-acid polypeptide reads, in one-letter code: Toxin F-VIII (81 aa).

The signal sequence occupies residues 1-21 (MKTLLLTLLVVTIVCLDLAST). 4 disulfides stabilise this stretch: Cys24/Cys43, Cys38/Cys60, Cys62/Cys73, and Cys74/Cys79.

This sequence belongs to the three-finger toxin family. Short-chain subfamily. Orphan group XI sub-subfamily. As to expression, expressed by the venom gland.

Its subcellular location is the secreted. Its function is as follows. Is cytotoxic against A549 cells (LC(50)=106 ug/ml). This is Toxin F-VIII from Dendroaspis angusticeps (Eastern green mamba).